A 156-amino-acid polypeptide reads, in one-letter code: Cyclic pyranopterin monophosphate synthase (156 aa).

Substrate contacts are provided by residues 73 to 75 and 110 to 111; these read LCH and ME. Asp125 is an active-site residue.

The protein belongs to the MoaC family. As to quaternary structure, homohexamer; trimer of dimers.

It catalyses the reaction (8S)-3',8-cyclo-7,8-dihydroguanosine 5'-triphosphate = cyclic pyranopterin phosphate + diphosphate. The protein operates within cofactor biosynthesis; molybdopterin biosynthesis. Catalyzes the conversion of (8S)-3',8-cyclo-7,8-dihydroguanosine 5'-triphosphate to cyclic pyranopterin monophosphate (cPMP). This is Cyclic pyranopterin monophosphate synthase from Stutzerimonas stutzeri (strain A1501) (Pseudomonas stutzeri).